We begin with the raw amino-acid sequence, 612 residues long: UvrABC system protein C (612 aa).

A GIY-YIG domain is found at 20–98 (THSGVYRMLD…IKQHRPKYNI (79 aa)). One can recognise a UVR domain in the interval 208-243 (SSVLEEISAKMYQASEDMEYEKAQVYRDQLVVLRKL).

Belongs to the UvrC family. In terms of assembly, interacts with UvrB in an incision complex.

It is found in the cytoplasm. The UvrABC repair system catalyzes the recognition and processing of DNA lesions. UvrC both incises the 5' and 3' sides of the lesion. The N-terminal half is responsible for the 3' incision and the C-terminal half is responsible for the 5' incision. In Francisella tularensis subsp. mediasiatica (strain FSC147), this protein is UvrABC system protein C.